The following is a 212-amino-acid chain: Guanylate kinase (212 aa).

The 183-residue stretch at 5–187 (GILCIISAPS…ALMHLQSIML (183 aa)) folds into the Guanylate kinase-like domain. 12 to 19 (APSGTGKS) contributes to the ATP binding site.

This sequence belongs to the guanylate kinase family.

The protein localises to the cytoplasm. The catalysed reaction is GMP + ATP = GDP + ADP. Its function is as follows. Essential for recycling GMP and indirectly, cGMP. This Blochmanniella pennsylvanica (strain BPEN) protein is Guanylate kinase.